Here is a 370-residue protein sequence, read N- to C-terminus: MVQGCLCWRGCCDLKTSFPWVTNSRRLWMNCIGCNPVWRLRAWGCLAGGTTLMVIWLFWLLRSVPGGAPAPQPTLTILIWHWPFTNRSPELSSDTCTRYGMASCHLSANRSLLASADAVVFHHRELQTRHSRLPLDQRPHGQPWVWATMESPSNTHGLRHFRGIFNWVLSYRRDSDIFVPYGRLEPFSGPTPPLPAKSRMAAWVVSNFQERQQRAKLYRQLAPHLKVDVFGRASGRPLCPNCLLPTVARYRFYLSFENSQHRDYITEKFWRNALAAGAVPVVLGPPRTTYEAFVPPDAFIHVDDFSSARELAVFLVSMNESRYRGFFAWRDRLRVRLLNDWRERFCTICARYPYLPRSQVYEDLESWFQA.

The Cytoplasmic portion of the chain corresponds to 1 to 36; that stretch reads MVQGCLCWRGCCDLKTSFPWVTNSRRLWMNCIGCNP. Residues 37–59 form a helical; Signal-anchor for type II membrane protein membrane-spanning segment; sequence VWRLRAWGCLAGGTTLMVIWLFW. Over 60 to 370 the chain is Lumenal; sequence LLRSVPGGAP…YEDLESWFQA (311 aa). Asparagine 86 carries N-linked (GlcNAc...) asparagine glycosylation. A disulfide bond links cysteine 96 and cysteine 104. The N-linked (GlcNAc...) asparagine glycan is linked to asparagine 109. Cysteines 239 and 242 form a disulfide. N-linked (GlcNAc...) asparagine glycosylation occurs at asparagine 319. A disulfide bridge connects residues cysteine 346 and cysteine 349.

It belongs to the glycosyltransferase 10 family. N-glycosylated. In terms of tissue distribution, expressed in lymph node and kidney.

The protein resides in the golgi apparatus. It localises to the golgi stack membrane. It catalyses the reaction an N-acetyl-alpha-neuraminyl-(2-&gt;3)-beta-D-galactosyl-(1-&gt;4)-N-acetyl-beta-D-glucosaminyl derivative + GDP-beta-L-fucose = an alpha-Neu5Ac-(2-&gt;3)-beta-D-Gal-(1-&gt;4)-[alpha-L-Fuc-(1-&gt;3)]-beta-D-GlcNAc derivative + GDP + H(+). The enzyme catalyses a neolactoside IV(3)-alpha-NeuAc-nLc4Cer + GDP-beta-L-fucose = a neolactoside IV(3)-alpha-NeuNAc,III(3)-alpha-Fuc-nLc4Cer + GDP + H(+). The catalysed reaction is a neolactoside VI(3)-alpha-NeuNAc-nLc6Cer + GDP-beta-L-fucose = a neolactoside VI(3)-alpha-NeuAc,V(3)-alphaFuc-nLc6Cer + GDP + H(+). It carries out the reaction an alpha-Neu5Ac-(2-&gt;3)-beta-D-Gal-(1-&gt;4)-beta-D-GlcNAc-(1-&gt;3)-beta-D-Gal-(1-&gt;4)-[alpha-L-Fuc-(1-&gt;3)]-beta-D-GlcNAc derivative + GDP-beta-L-fucose = an alpha-Neu5Ac-(2-&gt;3)-beta-D-Gal-(1-&gt;4)-[alpha-L-Fuc-(1-&gt;3)]-beta-D-GlcNAc-(1-&gt;3)-beta-D-Gal-(1-&gt;4)-[alpha-L-Fuc-(1-&gt;3)]-beta-D-GlcNAc derivative + GDP + H(+). It catalyses the reaction an alpha-Neu5Ac-(2-&gt;3)-beta-D-Gal-(1-&gt;4)-beta-D-GlcNAc6S derivative + GDP-beta-L-fucose = an alpha-Neu5Ac-(2-&gt;3)-beta-D-Gal-(1-&gt;4)-[alpha-L-Fuc-(1-&gt;3)]-beta-D-GlcNAc6S derivative + GDP + H(+). The enzyme catalyses alpha-Neu5Ac-(2-&gt;3)-beta-D-Gal-(1-&gt;4)-beta-D-GlcNAc-(1-&gt;3)-beta-D-Gal-(1-&gt;4)-D-Glc + GDP-beta-L-fucose = alpha-Neu5Ac-(2-&gt;3)-beta-D-Gal-(1-&gt;4)-[alpha-L-Fuc-(1-&gt;3)]-beta-D-GlcNAc-(1-&gt;3)-beta-D-Gal-(1-&gt;4)-D-Glc + GDP + H(+). The catalysed reaction is alpha-Neu5Ac-(2-&gt;3)-beta-D-Gal-(1-&gt;4)-beta-D-GlcNAc-(1-&gt;3)-beta-D-Gal-(1-&gt;4)-[alpha-L-Fuc-(1-&gt;3)]-beta-D-GlcNAc-(1-&gt;3)-beta-D-Gal-(1-&gt;4)-beta-D-GlcNAc + GDP-beta-L-fucose = alpha-Neu5Ac-(2-&gt;3)-beta-D-Gal-(1-&gt;4)-[alpha-L-Fuc-(1-&gt;3)]-beta-D-GlcNAc-(1-&gt;3)-beta-D-Gal-(1-&gt;4)-[alpha-L-Fuc-(1-&gt;3)]-beta-D-GlcNAc-(1-&gt;3)-beta-D-Gal-(1-&gt;4)-beta-D-GlcNAc + GDP + H(+). It carries out the reaction alpha-Neu5Ac-(2-&gt;3)-beta-D-Gal-(1-&gt;4)-beta-D-GlcNAc-(1-&gt;3)-beta-D-Gal-(1-&gt;4)-beta-D-GlcNAc-(1-&gt;3)-beta-D-Gal-(1-&gt;4)-beta-D-GlcNAc + GDP-beta-L-fucose = alpha-Neu5Ac-(2-&gt;3)-beta-D-Gal-(1-&gt;4)-[alpha-L-Fuc-(1-&gt;3)]-beta-D-GlcNAc-(1-&gt;3)-beta-D-Gal-(1-&gt;4)-beta-D-GlcNAc-(1-&gt;3)-beta-D-Gal-(1-&gt;4)-beta-D-GlcNAc + GDP + H(+). It functions in the pathway protein modification; protein glycosylation. With respect to regulation, inhibited by NaCl. Inhibited by GDP in a concentration dependent manner, with an IC(50) value of 93 uM. Also inhibited by GMP and GTP. Inhibited by N-ethylmaleimide. Activated by poly(ethylene glycol) by enhancing the thermal stability of FUT7. Activated by Mn2+, Ca2+, and Mg2+. Both panosialin A and B inhibit activity with IC(50) values of 4.8 and 5.3 ug/ml, respectively. Inhibited by gallic acid (GA) and (-)-epigallocatechin gallate (EGCG) in a time-dependent and irreversible manner with IC(50) values of 60 and 700 nM, respectively. Its function is as follows. Catalyzes the transfer of L-fucose, from a guanosine diphosphate-beta-L-fucose, to the N-acetyl glucosamine (GlcNAc) of a distal alpha2,3 sialylated lactosamine unit of a glycoprotein or a glycolipid-linked sialopolylactosamines chain through an alpha-1,3 glycosidic linkage and participates in the final fucosylation step in the biosynthesis of the sialyl Lewis X (sLe(x)), a carbohydrate involved in cell and matrix adhesion during leukocyte trafficking and fertilization. In vitro, also synthesizes sialyl-dimeric-Lex structures, from VIM-2 structures and both di-fucosylated and trifucosylated structures from mono-fucosylated precursors. However does not catalyze alpha 1-3 fucosylation when an internal alpha 1-3 fucosylation is present in polylactosamine chain and the fucosylation rate of the internal GlcNAc residues is reduced once fucose has been added to the distal GlcNAc. Also catalyzes the transfer of a fucose from GDP-beta-fucose to the 6-sulfated a(2,3)sialylated substrate to produce 6-sulfo sLex mediating significant L-selectin-dependent cell adhesion. Through sialyl-Lewis(x) biosynthesis, can control SELE- and SELP-mediated cell adhesion with leukocytes and allows leukocytes tethering and rolling along the endothelial tissue thereby enabling the leukocytes to accumulate at a site of inflammation. May enhance embryo implantation through sialyl Lewis X (sLeX)-mediated adhesion of embryo cells to endometrium. May affect insulin signaling by up-regulating the phosphorylation and expression of some signaling molecules involved in the insulin-signaling pathway through SLe(x) which is present on the glycans of the INSRR alpha subunit. The chain is Alpha-(1,3)-fucosyltransferase 7 from Rattus norvegicus (Rat).